The primary structure comprises 99 residues: DNA-binding protein Fis (99 aa).

The tract at residues 1–25 is disordered; it reads MFEQKISSEALTTTTSIPATGQITQ. The H-T-H motif DNA-binding region spans 75–94; the sequence is QTRAATMLGINRGTLRKKLK.

It belongs to the transcriptional regulatory Fis family. In terms of assembly, homodimer.

Functionally, activates ribosomal RNA transcription. Plays a direct role in upstream activation of rRNA promoters. The chain is DNA-binding protein Fis from Psychromonas ingrahamii (strain DSM 17664 / CCUG 51855 / 37).